The following is a 224-amino-acid chain: Small ribosomal subunit protein uS3 (224 aa).

In terms of domain architecture, KH type-2 spans 39–107; it reads IREFLKKKPS…DVWVEIAEVK (69 aa).

Belongs to the universal ribosomal protein uS3 family. Part of the 30S ribosomal subunit. Forms a tight complex with proteins S10 and S14.

In terms of biological role, binds the lower part of the 30S subunit head. Binds mRNA in the 70S ribosome, positioning it for translation. The chain is Small ribosomal subunit protein uS3 from Chlamydia trachomatis serovar D (strain ATCC VR-885 / DSM 19411 / UW-3/Cx).